The following is a 641-amino-acid chain: Threonine--tRNA ligase (641 aa).

Positions 1–61 (MPAITLPDGS…ADDASVRFIT (61 aa)) constitute a TGS domain. Residues 243-536 (DHRRIGREMD…LIEQHAGRFP (294 aa)) form a catalytic region. 3 residues coordinate Zn(2+): C336, H387, and H513.

The protein belongs to the class-II aminoacyl-tRNA synthetase family. In terms of assembly, homodimer. Zn(2+) is required as a cofactor.

Its subcellular location is the cytoplasm. The catalysed reaction is tRNA(Thr) + L-threonine + ATP = L-threonyl-tRNA(Thr) + AMP + diphosphate + H(+). Catalyzes the attachment of threonine to tRNA(Thr) in a two-step reaction: L-threonine is first activated by ATP to form Thr-AMP and then transferred to the acceptor end of tRNA(Thr). Also edits incorrectly charged L-seryl-tRNA(Thr). In Gluconacetobacter diazotrophicus (strain ATCC 49037 / DSM 5601 / CCUG 37298 / CIP 103539 / LMG 7603 / PAl5), this protein is Threonine--tRNA ligase.